Reading from the N-terminus, the 331-residue chain is Aspartate carbamoyltransferase catalytic subunit (331 aa).

Arg55 and Thr56 together coordinate carbamoyl phosphate. Lys84 contacts L-aspartate. 3 residues coordinate carbamoyl phosphate: Arg105, His133, and Gln136. Arg166 and Arg229 together coordinate L-aspartate. Carbamoyl phosphate contacts are provided by Leu268 and Pro269.

The protein belongs to the aspartate/ornithine carbamoyltransferase superfamily. ATCase family. As to quaternary structure, heterododecamer (2C3:3R2) of six catalytic PyrB chains organized as two trimers (C3), and six regulatory PyrI chains organized as three dimers (R2).

It catalyses the reaction carbamoyl phosphate + L-aspartate = N-carbamoyl-L-aspartate + phosphate + H(+). The protein operates within pyrimidine metabolism; UMP biosynthesis via de novo pathway; (S)-dihydroorotate from bicarbonate: step 2/3. In terms of biological role, catalyzes the condensation of carbamoyl phosphate and aspartate to form carbamoyl aspartate and inorganic phosphate, the committed step in the de novo pyrimidine nucleotide biosynthesis pathway. The protein is Aspartate carbamoyltransferase catalytic subunit of Alkaliphilus oremlandii (strain OhILAs) (Clostridium oremlandii (strain OhILAs)).